The primary structure comprises 361 residues: Putative F-box protein At3g19560 (361 aa).

Residues 3-49 (MTMMSDISQDLLEEILSRVPITSLRAVKSTCKRWKDLLNDPSFSKKY) enclose the F-box domain.

The chain is Putative F-box protein At3g19560 from Arabidopsis thaliana (Mouse-ear cress).